The primary structure comprises 555 residues: MSKQIVHGDQCRKKIIEGINVVANAVGITLGPKGRCVAIEQSYGPPKITKDGVSVAKAIQLKDKSLNVGAQFVISVASKTADVAGDGTTTATVIADAAVRELNKAEVAGIDIQEVRKGAEKAVEAVIADVRKNSSPVKNEEEIAQVATVSSNGDREIGEKIANAMKQVGQEGVITVEDSKNFNFEVEVVKGMRFDRGYISQYFATNREKMITEFENPYILLLDQKVSTVQPLVPVLEAVAHTGKPLVLIADDVDGEALTALILNNLKGSIKVVAVKAPGFGDRKKEMLEDIAILTNGEVITEQLGIKLEKVNDTSKLGTANRVIVTKDHTTIVHDKNNSDIEKKVNSRCEQIREAIKDTTSDYEKEKLQERLAKLRNGVAVLKVGGATEVEQKERKDRVEDALHATRAAVEEGIVPGGGVALFYASRVLDSLKFDNEDQRVGINIIKKVLEAPVRQIVKNAGGKEDVVVNELSKSTDKNRGFDARTMQYVDMIKAGIVDPTKVVRTALQDAFSVASLVIATSAMITDHEEDNNTGNRSGGGVGGGHHGGMGGMDF.

ATP-binding positions include Thr-29–Pro-32, Lys-50, Asp-86–Thr-90, Gly-418, and Asp-499. The interval His-528–Phe-555 is disordered. A compositionally biased stretch (gly residues) spans Arg-537 to Phe-555.

It belongs to the chaperonin (HSP60) family. In terms of assembly, forms a cylinder of 14 subunits composed of two heptameric rings stacked back-to-back. Interacts with the co-chaperonin GroES.

It is found in the cytoplasm. The catalysed reaction is ATP + H2O + a folded polypeptide = ADP + phosphate + an unfolded polypeptide.. Its function is as follows. Together with its co-chaperonin GroES, plays an essential role in assisting protein folding. The GroEL-GroES system forms a nano-cage that allows encapsulation of the non-native substrate proteins and provides a physical environment optimized to promote and accelerate protein folding. This is Chaperonin GroEL from Orientia tsutsugamushi (Rickettsia tsutsugamushi).